Reading from the N-terminus, the 203-residue chain is Outer-membrane lipoprotein LolB (203 aa).

Positions 1–17 (MNRLFRLLPLASLVLTA) are cleaved as a signal peptide. The N-palmitoyl cysteine moiety is linked to residue cysteine 18. Cysteine 18 carries S-diacylglycerol cysteine lipidation.

The protein belongs to the LolB family. Monomer.

The protein localises to the cell outer membrane. In terms of biological role, plays a critical role in the incorporation of lipoproteins in the outer membrane after they are released by the LolA protein. The protein is Outer-membrane lipoprotein LolB of Klebsiella pneumoniae (strain 342).